Reading from the N-terminus, the 298-residue chain is ADP/ATP translocase 3 (298 aa).

An N-acetylmethionine modification is found at methionine 1. Topologically, residues 1–7 are mitochondrial intermembrane; that stretch reads MTEQAIS. Threonine 2 carries the N-acetylthreonine; in ADP/ATP translocase 3, N-terminally processed modification. A Solcar 1 repeat occupies 6–98; it reads ISFAKDFLAG…FAFKDKYKQI (93 aa). Residues 8–37 form a helical membrane-spanning segment; it reads FAKDFLAGGIAAAISKTAVAPIERVKLLLQ. The Mitochondrial matrix portion of the chain corresponds to 38–74; that stretch reads VQHASKQIAADKQYKGIVDCIVRIPKEQGVLSFWRGN. Lysine 52 is subject to N6,N6,N6-trimethyllysine. Residues 75 to 99 traverse the membrane as a helical segment; that stretch reads LANVIRYFPTQALNFAFKDKYKQIF. Residues arginine 80 and lysine 92 each coordinate ADP. Residues 100 to 109 are Mitochondrial intermembrane-facing; it reads LGGVDKHTQF. Position 105 is an N6-acetyllysine (lysine 105). Residues 110 to 130 form a helical membrane-spanning segment; it reads WRYFAGNLASGGAAGATSLCF. 2 Solcar repeats span residues 111-201 and 212-297; these read RYFA…AKGM and VSWM…LKKV. At 131–178 the chain is on the mitochondrial matrix side; the sequence is VYPLDFARTRLAADVGKSATEREFKGLGDCLVKITKSDGIRGLYQGFN. The helical transmembrane segment at 179–199 threads the bilayer; sequence VSVQGIIIYRAAYFGVYGTAK. The Mitochondrial intermembrane portion of the chain corresponds to 200-210; it reads GMLPDPRNTHI. Residues 211–231 traverse the membrane as a helical segment; sequence VVSWMIAQTVTAVAGVFSYPF. Residues 232–273 are Mitochondrial matrix-facing; sequence DTVRRRMMMQSGRKGADIMYKGTLDCWRKIFKDEGGKAFFKG. Arginine 235 lines the ADP pocket. Residues 235 to 240 form an important for transport activity region; sequence RRRMMM. The Nucleotide carrier signature motif motif lies at 235–240; sequence RRRMMM. Residue lysine 268 is modified to N6-acetyllysine. The helical transmembrane segment at 274–291 threads the bilayer; it reads AWSNVLRGMGGAFVLVLY. The Mitochondrial intermembrane segment spans residues 292-298; that stretch reads DELKKVI.

The protein belongs to the mitochondrial carrier (TC 2.A.29) family. Monomer. Found in a complex with ARL2, ARL2BP and SLC25A6/ANT3. Trimethylated by ANTKMT at Lys-52.

It is found in the mitochondrion inner membrane. The protein localises to the membrane. It carries out the reaction ADP(in) + ATP(out) = ADP(out) + ATP(in). The catalysed reaction is H(+)(in) = H(+)(out). With respect to regulation, the matrix-open state (m-state) is inhibited by the membrane-permeable bongkrekic acid (BKA). The cytoplasmic-open state (c-state) is inhibited by the membrane-impermeable toxic inhibitor carboxyatractyloside (CATR). Proton transporter activity is inhibited by ADP:ATP antiporter activity. Its function is as follows. ADP:ATP antiporter that mediates import of ADP into the mitochondrial matrix for ATP synthesis, and export of ATP out to fuel the cell. Cycles between the cytoplasmic-open state (c-state) and the matrix-open state (m-state): operates by the alternating access mechanism with a single substrate-binding site intermittently exposed to either the cytosolic (c-state) or matrix (m-state) side of the inner mitochondrial membrane. In addition to its ADP:ATP antiporter activity, also involved in mitochondrial uncoupling and mitochondrial permeability transition pore (mPTP) activity. Plays a role in mitochondrial uncoupling by acting as a proton transporter: proton transport uncouples the proton flows via the electron transport chain and ATP synthase to reduce the efficiency of ATP production and cause mitochondrial thermogenesis. Proton transporter activity is inhibited by ADP:ATP antiporter activity, suggesting that SLC25A6/ANT3 acts as a master regulator of mitochondrial energy output by maintaining a delicate balance between ATP production (ADP:ATP antiporter activity) and thermogenesis (proton transporter activity). Proton transporter activity requires free fatty acids as cofactor, but does not transport it. Also plays a key role in mPTP opening, a non-specific pore that enables free passage of the mitochondrial membranes to solutes of up to 1.5 kDa, and which contributes to cell death. It is however unclear if SLC25A6/ANT3 constitutes a pore-forming component of mPTP or regulates it. The polypeptide is ADP/ATP translocase 3 (Sus scrofa (Pig)).